The sequence spans 565 residues: Estrogen receptor gamma (565 aa).

The tract at residues 1-168 is modulating; it reads MAVASSPEKD…TSGGKTDLHY (168 aa). 2 consecutive NR C4-type zinc fingers follow at residues 169–189 and 205–229; these read CAVCHDYASGYHYGVWSCEGC and CPATNECTIDKNRRKSCQACRLRKC. A DNA-binding region (nuclear receptor) is located at residues 169–234; sequence CAVCHDYASG…RLRKCYEVGM (66 aa). The segment at 235–285 is hinge; the sequence is TKCGMRKERGNYRSPQMRRMTRLTSQGRTDSSSVLTGSAVVSLNAPQPSAL. The NR LBD domain maps to 286–516; sequence TSEQLIERLM…DLLLEMLDAH (231 aa). The disordered stretch occupies residues 522–565; that stretch reads RLPRRSPEQEPEDQADAPAPPHSSGSGPSYTWTPSSSEGAGEPQ.

It belongs to the nuclear hormone receptor family. NR3 subfamily. As to quaternary structure, homodimer. As to expression, abundant in the ovary and testes, barely detectable in the brain and muscle and undetectable in the liver.

It localises to the nucleus. The steroid hormones and their receptors are involved in the regulation of eukaryotic gene expression and affect cellular proliferation and differentiation in target tissues. The sequence is that of Estrogen receptor gamma (esr3) from Micropogonias undulatus (Atlantic croaker).